A 439-amino-acid polypeptide reads, in one-letter code: UPF0229 protein Nham_0975 (439 aa).

The segment at Arg-39–Asp-106 is disordered. The segment covering Ser-58–Val-76 has biased composition (basic and acidic residues).

This sequence belongs to the UPF0229 family.

The chain is UPF0229 protein Nham_0975 from Nitrobacter hamburgensis (strain DSM 10229 / NCIMB 13809 / X14).